We begin with the raw amino-acid sequence, 1435 residues long: Probable ATP-dependent DNA helicase HFM1 (1435 aa).

The Helicase ATP-binding domain occupies 290–478 (DDLLYTDRNF…WLSDGERPAV (189 aa)). 303-310 (APTGSGKT) contributes to the ATP binding site. The DEAH box signature appears at 411–414 (DEVH). The 202-residue stretch at 519–720 (SVIQMYSDQK…DVNIAVEWIR (202 aa)) folds into the Helicase C-terminal domain. Residues 777–1092 (PTEAGRLMAW…GLDIQQKLTV (316 aa)) enclose the SEC63 domain. Positions 1109 to 1139 (KSETQISHSKHSDISTIAGPNKGTTASKKPG) are disordered. The C4-type zinc finger occupies 1143–1158 (CNHLCKSKHTCGHDCC). The interval 1295–1315 (GFGNTLSSSTRGSKLPLQESK) is disordered. The span at 1296-1306 (FGNTLSSSTRG) shows a compositional bias: polar residues.

This sequence belongs to the helicase family. SKI2 subfamily. Zn(2+) is required as a cofactor. Preferentially expressed in testis and ovary.

It carries out the reaction Couples ATP hydrolysis with the unwinding of duplex DNA by translocating in the 3'-5' direction.. It catalyses the reaction ATP + H2O = ADP + phosphate + H(+). Functionally, required for crossover formation and complete synapsis of homologous chromosomes during meiosis. The polypeptide is Probable ATP-dependent DNA helicase HFM1 (HFM1) (Homo sapiens (Human)).